The sequence spans 429 residues: Ribosomal RNA small subunit methyltransferase B (429 aa).

S-adenosyl-L-methionine contacts are provided by residues 254–260 (CSAPGGK), D277, D303, and D322. Residue C375 is the Nucleophile of the active site. A disordered region spans residues 397-419 (ALSETGTPDQPGQQNLPGGEEGD). A compositionally biased stretch (polar residues) spans 400–412 (ETGTPDQPGQQNL).

This sequence belongs to the class I-like SAM-binding methyltransferase superfamily. RsmB/NOP family.

It is found in the cytoplasm. It carries out the reaction cytidine(967) in 16S rRNA + S-adenosyl-L-methionine = 5-methylcytidine(967) in 16S rRNA + S-adenosyl-L-homocysteine + H(+). Specifically methylates the cytosine at position 967 (m5C967) of 16S rRNA. The chain is Ribosomal RNA small subunit methyltransferase B from Salmonella dublin (strain CT_02021853).